The primary structure comprises 503 residues: 3-octaprenyl-4-hydroxybenzoate carboxy-lyase (503 aa).

Asparagine 176 lines the Mn(2+) pocket. Prenylated FMN-binding positions include 179-181, 193-195, and 198-199; these read IYR, RWL, and RG. Residue glutamate 242 participates in Mn(2+) binding. Aspartate 303 functions as the Proton donor in the catalytic mechanism.

The protein belongs to the UbiD family. As to quaternary structure, homohexamer. Prenylated FMN serves as cofactor. It depends on Mn(2+) as a cofactor.

Its subcellular location is the cell membrane. The catalysed reaction is a 4-hydroxy-3-(all-trans-polyprenyl)benzoate + H(+) = a 2-(all-trans-polyprenyl)phenol + CO2. It participates in cofactor biosynthesis; ubiquinone biosynthesis. Its function is as follows. Catalyzes the decarboxylation of 3-octaprenyl-4-hydroxy benzoate to 2-octaprenylphenol, an intermediate step in ubiquinone biosynthesis. The chain is 3-octaprenyl-4-hydroxybenzoate carboxy-lyase from Ralstonia pickettii (strain 12J).